The primary structure comprises 414 residues: Hydroxysqualene dehydroxylase (414 aa).

Belongs to the HpnE family.

The enzyme catalyses squalene + FAD + H2O + H(+) = hydroxysqualene + FADH2. It functions in the pathway secondary metabolite biosynthesis; hopanoid biosynthesis. In terms of biological role, involved in the biosynthesis of the hopanoid precursor squalene (SQ) from farnesyl diphosphate (FPP). Catalyzes the third (last) step, the reduction of hydroxysqualene (HSQ) to SQ. The sequence is that of Hydroxysqualene dehydroxylase from Zymomonas mobilis subsp. mobilis (strain ATCC 31821 / ZM4 / CP4).